Here is a 367-residue protein sequence, read N- to C-terminus: uncharacterized protein (367 aa).

It localises to the mitochondrion. This is an uncharacterized protein from Paramecium tetraurelia.